Here is a 266-residue protein sequence, read N- to C-terminus: Gasdermin bGSDM (266 aa).

A lipid anchor (S-palmitoyl cysteine) is attached at C3. 4 beta stranded membrane passes run 69–85 (ISGQRTGDLSVGVGLSI), 97–115 (KLGLDTKYQNAKTTMFEFQ), 163–180 (KFTIEAKKSDGTALELTI), and 189–205 (GNVKVSGAASVTSKICY).

This sequence belongs to the bacterial gasdermin family. Monomer. As to quaternary structure, forms large, homooligomeric ring-shaped pores when inserted in membranes. In terms of processing, palmitoylation helps stabilize the inactive state; may self palmitoylate. Palmitoylation plays a significant role in pore formation.

It is found in the cytoplasm. Its subcellular location is the cell inner membrane. The full-length protein before cleavage is inactive: intramolecular interactions between the N-terminal domain and the C-terminal region as well as the lipid modification, mediate autoinhibition. The pyroptosis-like-inducing activity is carried by the released N-terminal domain (Gasdermin bGSDM, N-terminus). Functionally, precursor of a pore-forming protein involved in defense against bacteriophages. Expression of bGSDM and the neighboring protease gene (Ga0182885_104520) is toxic in E.coli. Cleavage of this precursor by its dedicated protease releases the active moiety (gasdermin bGSDM, N-terminus) which inserts into membranes, forming pores and triggering cell death. Its function is as follows. Pore-forming protein that causes membrane permeabilization via a pyroptosis-like activity. Makes ring-like pores when released. The chain is Gasdermin bGSDM from Desulfuromonadales bacterium.